A 155-amino-acid chain; its full sequence is UPF0251 protein Paes_1249 (155 aa).

Belongs to the UPF0251 family.

This chain is UPF0251 protein Paes_1249, found in Prosthecochloris aestuarii (strain DSM 271 / SK 413).